The primary structure comprises 64 residues: Translational regulator CsrA (64 aa).

Belongs to the CsrA/RsmA family. Homodimer; the beta-strands of each monomer intercalate to form a hydrophobic core, while the alpha-helices form wings that extend away from the core.

It is found in the cytoplasm. In terms of biological role, a key translational regulator that binds mRNA to regulate translation initiation and/or mRNA stability. Mediates global changes in gene expression, shifting from rapid growth to stress survival by linking envelope stress, the stringent response and the catabolite repression systems. Usually binds in the 5'-UTR; binding at or near the Shine-Dalgarno sequence prevents ribosome-binding, repressing translation, binding elsewhere in the 5'-UTR can activate translation and/or stabilize the mRNA. Its function is antagonized by small RNA(s). The protein is Translational regulator CsrA of Dichelobacter nodosus (strain VCS1703A).